The following is a 271-amino-acid chain: Large ribosomal subunit protein uL3c (271 aa).

The transit peptide at 1–49 directs the protein to the chloroplast; the sequence is MAIAMAVVSFPSLLNKTTLSSSLFTPTFLPAKSSSLLIKSSPKTRFVVS. The segment at 190 to 222 is disordered; sequence HGSKSHRALGSIGAGTTPGRVYKGKKMPGRMGG.

This sequence belongs to the universal ribosomal protein uL3 family. Part of the 50S ribosomal subunit.

Its subcellular location is the plastid. The protein localises to the chloroplast. Functionally, one of the primary rRNA binding proteins, it binds directly near the 3'-end of the 23S rRNA, where it nucleates assembly of the 50S subunit. The sequence is that of Large ribosomal subunit protein uL3c (RPL3A) from Arabidopsis thaliana (Mouse-ear cress).